The chain runs to 398 residues: Glia-derived nexin (398 aa).

An N-terminal signal peptide occupies residues 1 to 19 (MNWHLPLFLLASVTLPSIC). 2 N-linked (GlcNAc...) asparagine glycosylation sites follow: asparagine 118 and asparagine 159.

The protein belongs to the serpin family.

Its subcellular location is the secreted. It is found in the extracellular space. Functionally, serine protease inhibitor with activity toward thrombin, trypsin, and urokinase. Promotes neurite extension by inhibiting thrombin. Binds heparin. This Homo sapiens (Human) protein is Glia-derived nexin (SERPINE2).